Here is a 279-residue protein sequence, read N- to C-terminus: Energy-coupling factor transporter ATP-binding protein EcfA1 (279 aa).

Positions 5-240 (IELKKVTFNY…GDELLQLGLD (236 aa)) constitute an ABC transporter domain. 40–47 (GHNGSGKS) is an ATP binding site.

It belongs to the ABC transporter superfamily. Energy-coupling factor EcfA family. Forms a stable energy-coupling factor (ECF) transporter complex composed of 2 membrane-embedded substrate-binding proteins (S component), 2 ATP-binding proteins (A component) and 2 transmembrane proteins (T component).

It localises to the cell membrane. In terms of biological role, ATP-binding (A) component of a common energy-coupling factor (ECF) ABC-transporter complex. Unlike classic ABC transporters this ECF transporter provides the energy necessary to transport a number of different substrates. The chain is Energy-coupling factor transporter ATP-binding protein EcfA1 from Streptococcus pyogenes serotype M5 (strain Manfredo).